A 437-amino-acid chain; its full sequence is Methylenetetrahydrofolate--tRNA-(uracil-5-)-methyltransferase TrmFO (437 aa).

FAD is bound at residue 10-15; that stretch reads GAGLAG.

The protein belongs to the MnmG family. TrmFO subfamily. FAD is required as a cofactor.

It is found in the cytoplasm. It carries out the reaction uridine(54) in tRNA + (6R)-5,10-methylene-5,6,7,8-tetrahydrofolate + NADH + H(+) = 5-methyluridine(54) in tRNA + (6S)-5,6,7,8-tetrahydrofolate + NAD(+). The enzyme catalyses uridine(54) in tRNA + (6R)-5,10-methylene-5,6,7,8-tetrahydrofolate + NADPH + H(+) = 5-methyluridine(54) in tRNA + (6S)-5,6,7,8-tetrahydrofolate + NADP(+). Its function is as follows. Catalyzes the folate-dependent formation of 5-methyl-uridine at position 54 (M-5-U54) in all tRNAs. This is Methylenetetrahydrofolate--tRNA-(uracil-5-)-methyltransferase TrmFO from Pelotomaculum thermopropionicum (strain DSM 13744 / JCM 10971 / SI).